Here is a 352-residue protein sequence, read N- to C-terminus: Organic solute transporter subunit alpha (352 aa).

The Extracellular portion of the chain corresponds to 1 to 45 (MDVAHPEEVTRFSPDILMEKFNVSEACFLPPPISIQLILQLTWLD). Asn-22 carries an N-linked (GlcNAc...) asparagine glycan. A helical transmembrane segment spans residues 46 to 66 (IGVFAALTAMTVLTIAIYLEI). The Cytoplasmic segment spans residues 67–82 (VCYLMDKVKCPIKRKT). A helical membrane pass occupies residues 83 to 103 (LMWNSAAPTVIAITSCLGLWV). At 104-108 (PRAIM) the chain is on the extracellular side. The helical transmembrane segment at 109–129 (FVDMAAAMYFGVGFYLMLLII) threads the bilayer. Residues 130 to 173 (VQGYGGEEAMLQHLATHTIRISTGPCCCCCPCLPHIHLTRQKYK) are Cytoplasmic-facing. The helical transmembrane segment at 174–194 (IFVLGAFQVAFLRPALFLLGV) threads the bilayer. The Extracellular segment spans residues 195-210 (VLWTNGLYDPDDWSST). The helical transmembrane segment at 211–231 (SIFLWLNLFLGVSTILGLWPV) threads the bilayer. At 232-250 (NVLFRHSKVLMADQKLTCK) the chain is on the cytoplasmic side. A helical membrane pass occupies residues 251-271 (FALFQAILILSSLQNSIIGTL). Residues 272 to 294 (AGAGHIGCAPPYSARTRGQQMNN) lie on the Extracellular side of the membrane. A helical transmembrane segment spans residues 295–312 (QLLIIEMFFVGILTRISY). The Cytoplasmic segment spans residues 313 to 352 (RKRDDRPGHRHVGEVQQIVRECDQPAIADQQADHSSISHI).

It belongs to the OST-alpha family. In terms of assembly, interacts with slc51b. The Ost-alpha/Ost-beta complex is a heterodimer composed of alpha (slc51a) and beta (slc51b) subunit. In terms of tissue distribution, expressed in liver.

It is found in the cell membrane. The protein localises to the endoplasmic reticulum membrane. It catalyses the reaction taurocholate(out) = taurocholate(in). The enzyme catalyses prostaglandin E2(out) = prostaglandin E2(in). It carries out the reaction estrone 3-sulfate(out) = estrone 3-sulfate(in). The catalysed reaction is dehydroepiandrosterone 3-sulfate(out) = dehydroepiandrosterone 3-sulfate(in). It catalyses the reaction tauroursodeoxycholate(out) = tauroursodeoxycholate(in). The enzyme catalyses glycoursodeoxycholate(out) = glycoursodeoxycholate(in). It carries out the reaction glycocholate(out) = glycocholate(in). The catalysed reaction is taurochenodeoxycholate(out) = taurochenodeoxycholate(in). It catalyses the reaction glycochenodeoxycholate(out) = glycochenodeoxycholate(in). The enzyme catalyses taurodeoxycholate(out) = taurodeoxycholate(in). It carries out the reaction glycodeoxycholate(out) = glycodeoxycholate(in). In terms of biological role, essential component of the Ost-alpha/Ost-beta complex, a heterodimer that acts as the intestinal basolateral transporter responsible for the translocation of bile acids (such as taurocholate), steroids (such as estrone sulfate), and eicosanoids (such as prostaglandin E2). This chain is Organic solute transporter subunit alpha (slc51a), found in Leucoraja erinaceus (Little skate).